Reading from the N-terminus, the 125-residue chain is Large ribosomal subunit protein bL12 (125 aa).

Belongs to the bacterial ribosomal protein bL12 family. As to quaternary structure, homodimer. Part of the ribosomal stalk of the 50S ribosomal subunit. Forms a multimeric L10(L12)X complex, where L10 forms an elongated spine to which 2 to 4 L12 dimers bind in a sequential fashion. Binds GTP-bound translation factors.

Forms part of the ribosomal stalk which helps the ribosome interact with GTP-bound translation factors. Is thus essential for accurate translation. The chain is Large ribosomal subunit protein bL12 from Thioalkalivibrio sulfidiphilus (strain HL-EbGR7).